The primary structure comprises 418 residues: 3-isopropylmalate dehydratase large subunit 1 (418 aa).

Residues C298, C358, and C361 each coordinate [4Fe-4S] cluster.

This sequence belongs to the aconitase/IPM isomerase family. LeuC type 2 subfamily. In terms of assembly, heterodimer of LeuC and LeuD. The cofactor is [4Fe-4S] cluster.

It carries out the reaction (2R,3S)-3-isopropylmalate = (2S)-2-isopropylmalate. Its pathway is amino-acid biosynthesis; L-leucine biosynthesis; L-leucine from 3-methyl-2-oxobutanoate: step 2/4. Functionally, catalyzes the isomerization between 2-isopropylmalate and 3-isopropylmalate, via the formation of 2-isopropylmaleate. The protein is 3-isopropylmalate dehydratase large subunit 1 of Archaeoglobus fulgidus (strain ATCC 49558 / DSM 4304 / JCM 9628 / NBRC 100126 / VC-16).